The sequence spans 325 residues: Phenylalanine--tRNA ligase alpha subunit (325 aa).

Mg(2+) is bound at residue E251.

This sequence belongs to the class-II aminoacyl-tRNA synthetase family. Phe-tRNA synthetase alpha subunit type 1 subfamily. Tetramer of two alpha and two beta subunits. The cofactor is Mg(2+).

The protein localises to the cytoplasm. It catalyses the reaction tRNA(Phe) + L-phenylalanine + ATP = L-phenylalanyl-tRNA(Phe) + AMP + diphosphate + H(+). The chain is Phenylalanine--tRNA ligase alpha subunit from Thermotoga petrophila (strain ATCC BAA-488 / DSM 13995 / JCM 10881 / RKU-1).